Reading from the N-terminus, the 446-residue chain is Sulfoquinovose isomerase (446 aa).

Belongs to the SqvD family.

It carries out the reaction 6-sulfo-beta-D-quinovose = 6-deoxy-6-sulfo-D-fructose. Part of the sulfo-TAL (or sulfo-SFT) pathway, a D-sulfoquinovose degradation pathway that produces sulfolactate (SL). Catalyzes the isomerization of sulfoquinovose (SQ) to 6-deoxy-6-sulfo-D-fructose (SF). This Priestia aryabhattai (Bacillus aryabhattai) protein is Sulfoquinovose isomerase.